The following is a 588-amino-acid chain: DNA mismatch repair protein MutL (588 aa).

The protein belongs to the DNA mismatch repair MutL/HexB family.

Functionally, this protein is involved in the repair of mismatches in DNA. It is required for dam-dependent methyl-directed DNA mismatch repair. May act as a 'molecular matchmaker', a protein that promotes the formation of a stable complex between two or more DNA-binding proteins in an ATP-dependent manner without itself being part of a final effector complex. In Fervidobacterium nodosum (strain ATCC 35602 / DSM 5306 / Rt17-B1), this protein is DNA mismatch repair protein MutL.